The chain runs to 197 residues: ATP-dependent Clp protease proteolytic subunit (197 aa).

S98 serves as the catalytic Nucleophile. H123 is a catalytic residue.

Belongs to the peptidase S14 family. Fourteen ClpP subunits assemble into 2 heptameric rings which stack back to back to give a disk-like structure with a central cavity, resembling the structure of eukaryotic proteasomes.

Its subcellular location is the cytoplasm. It catalyses the reaction Hydrolysis of proteins to small peptides in the presence of ATP and magnesium. alpha-casein is the usual test substrate. In the absence of ATP, only oligopeptides shorter than five residues are hydrolyzed (such as succinyl-Leu-Tyr-|-NHMec, and Leu-Tyr-Leu-|-Tyr-Trp, in which cleavage of the -Tyr-|-Leu- and -Tyr-|-Trp bonds also occurs).. In terms of biological role, cleaves peptides in various proteins in a process that requires ATP hydrolysis. Has a chymotrypsin-like activity. Plays a major role in the degradation of misfolded proteins. This chain is ATP-dependent Clp protease proteolytic subunit, found in Lysinibacillus sphaericus (strain C3-41).